The primary structure comprises 213 residues: MKFFIDTANIDDIRAANSLGILAGVTTNPSLVAKEGVSFHDRLREITKEVSGSVSAEVISEDAEGMIEEGKELAAIAPNITVKVPMTLEGLKAVKVFSELNIKTNVTLIFNANQALLAARAGATYVSPFLGRLDDIGQDGMTLISAIAEIFDRHSVSTEIIAASIRHPLHVTDAALNGAHIATIPYKVLEQLVKHPLTDQGIQKFLDDWNSQK.

K83 functions as the Schiff-base intermediate with substrate in the catalytic mechanism.

It belongs to the transaldolase family. Type 3B subfamily.

The protein resides in the cytoplasm. It catalyses the reaction D-sedoheptulose 7-phosphate + D-glyceraldehyde 3-phosphate = D-erythrose 4-phosphate + beta-D-fructose 6-phosphate. It participates in carbohydrate degradation; pentose phosphate pathway; D-glyceraldehyde 3-phosphate and beta-D-fructose 6-phosphate from D-ribose 5-phosphate and D-xylulose 5-phosphate (non-oxidative stage): step 2/3. Functionally, transaldolase is important for the balance of metabolites in the pentose-phosphate pathway. This is Probable transaldolase from Oceanobacillus iheyensis (strain DSM 14371 / CIP 107618 / JCM 11309 / KCTC 3954 / HTE831).